The chain runs to 358 residues: 3-dehydroquinate synthase (358 aa).

NAD(+) is bound by residues 70–75 (DGEQYK), 104–108 (GVIGD), 128–129 (TT), Lys141, Lys150, and 168–171 (CLHT). Zn(2+) is bound by residues Glu183, His246, and His263.

Belongs to the sugar phosphate cyclases superfamily. Dehydroquinate synthase family. It depends on Co(2+) as a cofactor. Zn(2+) is required as a cofactor. The cofactor is NAD(+).

It localises to the cytoplasm. The enzyme catalyses 7-phospho-2-dehydro-3-deoxy-D-arabino-heptonate = 3-dehydroquinate + phosphate. It functions in the pathway metabolic intermediate biosynthesis; chorismate biosynthesis; chorismate from D-erythrose 4-phosphate and phosphoenolpyruvate: step 2/7. Its function is as follows. Catalyzes the conversion of 3-deoxy-D-arabino-heptulosonate 7-phosphate (DAHP) to dehydroquinate (DHQ). The protein is 3-dehydroquinate synthase of Shewanella loihica (strain ATCC BAA-1088 / PV-4).